The sequence spans 267 residues: 4-hydroxy-tetrahydrodipicolinate reductase (267 aa).

8–13 (GANGRM) lines the NAD(+) pocket. Residue R35 coordinates NADP(+). NAD(+)-binding positions include 98–100 (GTT) and 122–125 (AANY). H155 serves as the catalytic Proton donor/acceptor. H156 contacts (S)-2,3,4,5-tetrahydrodipicolinate. The Proton donor role is filled by K159. Position 165-166 (165-166 (GT)) interacts with (S)-2,3,4,5-tetrahydrodipicolinate.

This sequence belongs to the DapB family.

Its subcellular location is the cytoplasm. The enzyme catalyses (S)-2,3,4,5-tetrahydrodipicolinate + NAD(+) + H2O = (2S,4S)-4-hydroxy-2,3,4,5-tetrahydrodipicolinate + NADH + H(+). It catalyses the reaction (S)-2,3,4,5-tetrahydrodipicolinate + NADP(+) + H2O = (2S,4S)-4-hydroxy-2,3,4,5-tetrahydrodipicolinate + NADPH + H(+). It functions in the pathway amino-acid biosynthesis; L-lysine biosynthesis via DAP pathway; (S)-tetrahydrodipicolinate from L-aspartate: step 4/4. Its function is as follows. Catalyzes the conversion of 4-hydroxy-tetrahydrodipicolinate (HTPA) to tetrahydrodipicolinate. This Pseudoalteromonas atlantica (strain T6c / ATCC BAA-1087) protein is 4-hydroxy-tetrahydrodipicolinate reductase.